The chain runs to 1386 residues: Roundabout homolog 3 (1386 aa).

A signal peptide spans 1–20; that stretch reads MLRYLLKTLLQMNLFADSLA. Over 21-891 the chain is Extracellular; sequence GDISNSSELL…VRLARVLREP (871 aa). N-linked (GlcNAc...) asparagine glycans are attached at residues Asn-25, Asn-34, Asn-41, and Asn-53. 5 consecutive Ig-like C2-type domains span residues 64-160, 166-253, 258-342, 347-440, and 450-531; these read PRIV…ASLE, DDFR…AEVM, PSFL…GSLS, PQLV…ALLE, and PPVI…GEAT. An intrachain disulfide couples Cys-85 to Cys-143. N-linked (GlcNAc...) asparagine glycosylation occurs at Asn-156. Cystine bridges form between Cys-187–Cys-236, Cys-279–Cys-326, and Cys-368–Cys-424. Asn-410, Asn-459, and Asn-503 each carry an N-linked (GlcNAc...) asparagine glycan. Cys-472 and Cys-521 are joined by a disulfide. 2 disordered regions span residues 541–563 and 639–662; these read DWGV…SQPV and EPSP…EDPW. Over residues 546 to 559 the composition is skewed to pro residues; that stretch reads PDPPTEPSSPPGAP. 3 consecutive Fibronectin type-III domains span residues 558 to 652, 671 to 766, and 771 to 869; these read APSQ…TQDS, VAVR…IPEE, and PPQG…SPPD. N-linked (GlcNAc...) asparagine glycosylation is found at Asn-784, Asn-813, and Asn-820. A helical membrane pass occupies residues 892 to 912; it reads AFLAGSGAACGALLLGLCAAL. The Cytoplasmic segment spans residues 913–1386; it reads YWRRKQRKEL…PGQKRREEPR (474 aa). Disordered regions lie at residues 965 to 989, 1028 to 1310, and 1327 to 1386; these read SWPH…NPDP, ELQT…AVPL, and SRPS…EEPR. The segment covering 1067–1083 has biased composition (low complexity); sequence VKLLGKPVQMPSLNWPE. Over residues 1099–1112 the composition is skewed to acidic residues; that stretch reads GPEEELEGSSEPEE. The span at 1158–1169 shows a compositional bias: pro residues; sequence PSPPDPPQPPTD. Composition is skewed to low complexity over residues 1178–1191 and 1202–1229; these read RRVP…LSVS and PAGL…SAPG. Ser-1263 is subject to Phosphoserine. Residues 1294-1304 are compositionally biased toward basic and acidic residues; it reads LERERSGERKA. Over residues 1333–1344 the composition is skewed to polar residues; sequence SRGQGTSTCSTA. Low complexity predominate over residues 1345–1361; that stretch reads GSNSSRGSSSSRGSRGP.

It belongs to the immunoglobulin superfamily. ROBO family. Monomer. Interacts (via Fibronectin type-III 1 domain) with NELL2 (via the EGF domains) with a 3:3 stoichiometry; this interaction promotes oligomerization of ROBO3 resulting in the repulsion of commissural axons in the midline.

It is found in the membrane. In terms of biological role, receptor involved in axon guidance during development. Acts as a multifunctional regulator of pathfinding that simultaneously mediates NELL2 repulsion, inhibits SLIT repulsion, and facilitates Netrin-1/NTN1 attraction. In spinal cord development plays a role in guiding commissural axons probably by preventing premature sensitivity to Slit proteins thus inhibiting Slit signaling through ROBO1/ROBO2. Binding OF NELL2 to the receptor ROBO3 promotes oligomerization of ROBO3, resulting in the repulsion of commissural axons in the midline. ROBO3 also indirectly boosts axon attraction to NTN1 without interacting with NTN1 itself. The polypeptide is Roundabout homolog 3 (Homo sapiens (Human)).